The sequence spans 524 residues: Thioredoxin reductase 2, mitochondrial (524 aa).

Residues 1-36 constitute a mitochondrion transit peptide; the sequence is MAAMAVALRGLGGRFRWRTQAVAGGVRGAARGAAAG. 41–70 serves as a coordination point for FAD; the sequence is DLLVVGGGSGGLACAKEAAQLGRKVAVVDY. Cysteines 86 and 91 form a disulfide. Lysine 175 and lysine 329 each carry N6-succinyllysine. Histidine 497 acts as the Proton acceptor in catalysis. The segment at residues 522-523 is a cross-link (cysteinyl-selenocysteine (Cys-Sec)); it reads CU. Position 523 (selenocysteine 523) is a non-standard amino acid, selenocysteine.

This sequence belongs to the class-I pyridine nucleotide-disulfide oxidoreductase family. In terms of assembly, homodimer. It depends on FAD as a cofactor. Highly expressed in the prostate, ovary, liver, testis, uterus, colon and small intestine. Intermediate levels in brain, skeletal muscle, heart and spleen. Low levels in placenta, pancreas, thymus and peripheral blood leukocytes. According to PubMed:10608886, high levels in kidney, whereas according to PubMed:9923614, levels are low. High expression is observed in the adrenal cortex.

It is found in the mitochondrion. It carries out the reaction [thioredoxin]-dithiol + NADP(+) = [thioredoxin]-disulfide + NADPH + H(+). Involved in the control of reactive oxygen species levels and the regulation of mitochondrial redox homeostasis. Maintains thioredoxin in a reduced state. May play a role in redox-regulated cell signaling. This is Thioredoxin reductase 2, mitochondrial from Homo sapiens (Human).